The sequence spans 191 residues: Peptidyl-tRNA hydrolase (191 aa).

Tyrosine 15 serves as a coordination point for tRNA. The active-site Proton acceptor is histidine 20. The tRNA site is built by phenylalanine 66, asparagine 68, and asparagine 114.

This sequence belongs to the PTH family. Monomer.

The protein localises to the cytoplasm. The enzyme catalyses an N-acyl-L-alpha-aminoacyl-tRNA + H2O = an N-acyl-L-amino acid + a tRNA + H(+). Functionally, hydrolyzes ribosome-free peptidyl-tRNAs (with 1 or more amino acids incorporated), which drop off the ribosome during protein synthesis, or as a result of ribosome stalling. In terms of biological role, catalyzes the release of premature peptidyl moieties from peptidyl-tRNA molecules trapped in stalled 50S ribosomal subunits, and thus maintains levels of free tRNAs and 50S ribosomes. In Streptococcus agalactiae serotype III (strain NEM316), this protein is Peptidyl-tRNA hydrolase.